The sequence spans 165 residues: uncharacterized protein (165 aa).

The chain crosses the membrane as a helical span at residues 16–36; that stretch reads ASISSILNFFFFYIMEYFVAV.

It belongs to the asfivirus F165R family.

It is found in the host membrane. This is an uncharacterized protein from African swine fever virus (strain Badajoz 1971 Vero-adapted) (Ba71V).